The chain runs to 619 residues: tRNA uridine 5-carboxymethylaminomethyl modification enzyme MnmG (619 aa).

Residues 14 to 19 (GAGHAG), V126, and S181 contribute to the FAD site. 273–287 (GPRYCPSIEDKIMRF) contributes to the NAD(+) binding site. Q370 contributes to the FAD binding site.

This sequence belongs to the MnmG family. In terms of assembly, homodimer. Heterotetramer of two MnmE and two MnmG subunits. FAD is required as a cofactor.

The protein resides in the cytoplasm. Its function is as follows. NAD-binding protein involved in the addition of a carboxymethylaminomethyl (cmnm) group at the wobble position (U34) of certain tRNAs, forming tRNA-cmnm(5)s(2)U34. This is tRNA uridine 5-carboxymethylaminomethyl modification enzyme MnmG from Syntrophotalea carbinolica (strain DSM 2380 / NBRC 103641 / GraBd1) (Pelobacter carbinolicus).